The following is a 96-amino-acid chain: Cytochrome c oxidase assembly factor 3 homolog, mitochondrial (96 aa).

Residues 1-50 (MSSQGEPKPEAQFAKRIDPTKEALTKEQLQFIRQVEMAQWKKKTDKLRGR) lie on the Mitochondrial matrix side of the membrane. Residues 51 to 73 (NVATGLAIGAVVLGIYGYTFYSV) form a helical membrane-spanning segment. Residues 74-96 (SQEKIMDEIDEEAKVRVPKTGAN) lie on the Mitochondrial intermembrane side of the membrane.

It belongs to the COA3 family. In terms of assembly, core component of the MITRAC (mitochondrial translation regulation assembly intermediate of cytochrome c oxidase complex) complex.

Its subcellular location is the mitochondrion inner membrane. Functionally, core component of the MITRAC (mitochondrial translation regulation assembly intermediate of cytochrome c oxidase complex) complex, that regulates cytochrome c oxidase assembly. MITRAC complexes regulate both translation of mitochondrial encoded components and assembly of nuclear-encoded components imported in mitochondrion. Required for efficient translation of MT-CO1 and mitochondrial respiratory chain complex IV assembly. The protein is Cytochrome c oxidase assembly factor 3 homolog, mitochondrial (coa3a) of Danio rerio (Zebrafish).